Reading from the N-terminus, the 105-residue chain is Malonate decarboxylase acyl carrier protein (105 aa).

Ser-28 is modified (O-(phosphoribosyl dephospho-coenzyme A)serine).

It belongs to the MdcC family. In terms of processing, covalently binds the prosthetic group of malonate decarboxylase.

It is found in the cytoplasm. Functionally, subunit of malonate decarboxylase, it is an acyl carrier protein to which acetyl and malonyl thioester residues are bound via a 2'-(5''-phosphoribosyl)-3'-dephospho-CoA prosthetic group and turn over during the catalytic mechanism. This Bradyrhizobium diazoefficiens (strain JCM 10833 / BCRC 13528 / IAM 13628 / NBRC 14792 / USDA 110) protein is Malonate decarboxylase acyl carrier protein.